The primary structure comprises 101 residues: MPRLCVYMLVLVLALATFSEASWKPRSQLQDASSGPGTNEDLEQRQFNKLGSASHHRRQLGPQGPQHFIADLSKKQRPRMEEEEEAYGWMDFGRRSAEEDQ.

The N-terminal stretch at 1–21 is a signal peptide; sequence MPRLCVYMLVLVLALATFSEA. The disordered stretch occupies residues 23–101; the sequence is WKPRSQLQDA…FGRRSAEEDQ (79 aa). Positions 25–37 are enriched in polar residues; that stretch reads PRSQLQDASSGPG. Position 87 is a sulfotyrosine (Tyr-87). Residue Phe-92 is modified to Phenylalanine amide. The span at 92–101 shows a compositional bias: basic and acidic residues; sequence FGRRSAEEDQ. Ser-96 carries the post-translational modification Phosphoserine. Residues 96-101 constitute a propeptide that is removed on maturation; it reads SAEEDQ.

The protein belongs to the gastrin/cholecystokinin family. Sulfation enhances proteolytic processing, and blocks peptide degradation. Levels of sulfation differ between proteolytically-cleaved gastrins and between tissues. Abundantly expressed in the stomach and duodenum. Low levels in brain, ovary and pancreas.

It is found in the secreted. Functionally, gastrin stimulates the stomach mucosa to produce and secrete hydrochloric acid and the pancreas to secrete its digestive enzymes. It also stimulates smooth muscle contraction and increases blood circulation and water secretion in the stomach and intestine. This is Gastrin (Gast) from Mus musculus (Mouse).